The chain runs to 497 residues: TBC1 domain family member 22A (497 aa).

The tract at residues 83–147 (RNHSQRQGRP…DAAPLQRSQS (65 aa)) is disordered. A phosphoserine mark is found at serine 112, serine 125, and serine 147. Positions 202-426 (GIPKPVRPMT…RLWDTYQSEP (225 aa)) constitute a Rab-GAP TBC domain.

As to quaternary structure, homodimer. Interacts with ACBD3 and ARFGEF1. Interacts with YWHAB, YWHAE, YWHAG, YWHAH, YWHAQ and YWHAZ.

May act as a GTPase-activating protein for Rab family protein(s). The polypeptide is TBC1 domain family member 22A (TBC1D22A) (Macaca fascicularis (Crab-eating macaque)).